Reading from the N-terminus, the 179-residue chain is ATP-dependent protease subunit HslV (179 aa).

The active site involves threonine 7. Residues glycine 162, cysteine 165, and threonine 168 each contribute to the Na(+) site.

The protein belongs to the peptidase T1B family. HslV subfamily. As to quaternary structure, a double ring-shaped homohexamer of HslV is capped on each side by a ring-shaped HslU homohexamer. The assembly of the HslU/HslV complex is dependent on binding of ATP.

It is found in the cytoplasm. It carries out the reaction ATP-dependent cleavage of peptide bonds with broad specificity.. Allosterically activated by HslU binding. Functionally, protease subunit of a proteasome-like degradation complex believed to be a general protein degrading machinery. The polypeptide is ATP-dependent protease subunit HslV (Teredinibacter turnerae (strain ATCC 39867 / T7901)).